A 352-amino-acid chain; its full sequence is N-acetyl-gamma-glutamyl-phosphate reductase 1 (352 aa).

Belongs to the NAGSA dehydrogenase family. Type 1 subfamily.

Its subcellular location is the cytoplasm. The enzyme catalyses N-acetyl-L-glutamate 5-semialdehyde + phosphate + NADP(+) = N-acetyl-L-glutamyl 5-phosphate + NADPH + H(+). The protein operates within amino-acid biosynthesis; L-arginine biosynthesis; N(2)-acetyl-L-ornithine from L-glutamate: step 3/4. Its function is as follows. Catalyzes the NADPH-dependent reduction of N-acetyl-5-glutamyl phosphate to yield N-acetyl-L-glutamate 5-semialdehyde. The chain is N-acetyl-gamma-glutamyl-phosphate reductase 1 from Nostoc sp. (strain PCC 7120 / SAG 25.82 / UTEX 2576).